Consider the following 64-residue polypeptide: Large ribosomal subunit protein bL35 (64 aa).

This sequence belongs to the bacterial ribosomal protein bL35 family.

The sequence is that of Large ribosomal subunit protein bL35 from Shewanella halifaxensis (strain HAW-EB4).